The chain runs to 4717 residues: Midasin (4717 aa).

6 AAA-ATPase protomer regions span residues leucine 149–phenylalanine 384, glutamate 458–arginine 797, glutamate 871–isoleucine 1131, serine 1157–glutamate 1448, valine 1552–aspartate 1811, and valine 1858–lysine 2106. ATP is bound by residues glycine 159–lysine 166 and glycine 474–threonine 481. Serine 593 is subject to Phosphoserine. ATP contacts are provided by residues glycine 901–threonine 908, glycine 1193–threonine 1200, glycine 1566–threonine 1573, and glycine 1876–threonine 1883. Residues lysine 2173–asparagine 3925 form a linker region. Disordered stretches follow at residues proline 3898–threonine 3924, leucine 3936–histidine 4283, and glutamate 4295–aspartate 4365. Acidic residues-rich tracts occupy residues leucine 3936–glutamate 3950 and glutamate 3973–glutamate 3993. Positions asparagine 4020–aspartate 4030 are enriched in polar residues. Residues leucine 4031–lysine 4049 show a composition bias toward basic and acidic residues. Residues glutamate 4050–glutamine 4066 show a composition bias toward acidic residues. A compositionally biased stretch (basic and acidic residues) spans asparagine 4080–serine 4103. 3 stretches are compositionally biased toward acidic residues: residues aspartate 4104–glutamate 4177, glutamate 4184–alanine 4196, and glutamate 4226–alanine 4236. Basic and acidic residues-rich tracts occupy residues glutamine 4258 to arginine 4275 and alanine 4329 to serine 4342. A compositionally biased stretch (polar residues) spans alanine 4343 to isoleucine 4355. The 203-residue stretch at glutamine 4505–leucine 4707 folds into the VWFA domain.

Belongs to the midasin family. As to quaternary structure, associates with pre-60S ribosomes in the nucleoplasm.

It is found in the nucleus. It localises to the nucleolus. Its subcellular location is the nucleoplasm. Functionally, nuclear chaperone required for maturation and nuclear export of pre-60S ribosome subunits. Functions at successive maturation steps to remove ribosomal factors at critical transition points, first driving the exit of early pre-60S particles from the nucleolus and then driving late pre-60S particles from the nucleus. The sequence is that of Midasin (mdn1) from Schizosaccharomyces pombe (strain 972 / ATCC 24843) (Fission yeast).